We begin with the raw amino-acid sequence, 547 residues long: Agglutinin-1 (547 aa).

Positions 1 to 20 (MKFETTKNKLHGNAYYQAQF) are cleaved as a signal peptide. Glutamine 21 is modified (pyrrolidone carboxylic acid). The active site involves glutamate 183. Intrachain disulfides connect cysteine 266–cysteine 288, cysteine 305–cysteine 324, and cysteine 348–cysteine 365. Residues 279–280 (RS) constitute a propeptide, linker peptide. Residues 292 to 419 (YEPTVRIGGR…YRMRQGWRTG (128 aa)) form the Ricin B-type lectin 1 domain. One copy of the 1-alpha repeat lies at 302 to 344 (DGLCVDVSDNAYNNGNPIILWKCKDQLEVNQLWTLKSDKTIRS). One copy of the 1-beta repeat lies at 345–385 (KGKCLTTYGYAPGNYVMIYDCSSAVAEATYWDIWDNGTIIN). Asparagine 380 and asparagine 420 each carry an N-linked (GlcNAc...) asparagine glycan. One copy of the 1-gamma repeat lies at 388–420 (SGLVLSAESSSMGGTLTVQKNDYRMRQGWRTGN). Residues 422-546 (TSPFVTSIAG…GNANQMWATL (125 aa)) enclose the Ricin B-type lectin 2 domain. The 2-alpha repeat unit spans residues 433–468 (FKLCMEAHGNSMWLDVCDITKEEQQWAVYPDGSIRP). Disulfide bonds link cysteine 436-cysteine 449 and cysteine 475-cysteine 492. The stretch at 472–511 (TNNCLTCEEHKQGATIVMMGCSNAWASQRWVFKSDGTIYN) is one 2-beta repeat. The stretch at 514-547 (DDMVMDVKSSDPSLKQIILWPYTGNANQMWATLF) is one 2-gamma repeat.

This sequence in the N-terminal section; belongs to the ribosome-inactivating protein family. Type 2 RIP subfamily. As to quaternary structure, heterotetramer of two A and two B chains.

It catalyses the reaction Endohydrolysis of the N-glycosidic bond at one specific adenosine on the 28S rRNA.. In terms of biological role, the A chain is responsible for inhibiting protein synthesis through the catalytic inactivation of 60S ribosomal subunits by removing adenine from position 4,324 of 28S rRNA. Less toxic than abrin-a. The B chain is a galactose-specific lectin that facilitates the binding to the cell membrane that precedes endocytosis. This is Agglutinin-1 from Abrus precatorius (Indian licorice).